Reading from the N-terminus, the 349-residue chain is Selenide, water dikinase (349 aa).

Cys-17 is an active-site residue. Residues Lys-20 and 48–50 (YFD) each bind ATP. Residue Asp-51 participates in Mg(2+) binding. ATP-binding positions include Asp-68, Asp-91, and 139-141 (GHS). Asp-91 contributes to the Mg(2+) binding site. Asp-229 is a Mg(2+) binding site.

The protein belongs to the selenophosphate synthase 1 family. Class I subfamily. Homodimer. The cofactor is Mg(2+).

The enzyme catalyses hydrogenselenide + ATP + H2O = selenophosphate + AMP + phosphate + 2 H(+). Functionally, synthesizes selenophosphate from selenide and ATP. This chain is Selenide, water dikinase, found in Nitrosomonas eutropha (strain DSM 101675 / C91 / Nm57).